The sequence spans 507 residues: Fatty acid resistance protein FarB (507 aa).

A run of 14 helical transmembrane segments spans residues 8–28 (GAAL…EVLD), 52–72 (WVIT…GFLA), 78–98 (VKLF…CGIA), 109–129 (ILQG…LMAS), 136–156 (MLAL…GPIL), 164–184 (WHWG…AWIT), 199–219 (PTDY…QMML), 233–253 (IITL…WELG), 274–294 (IATS…PLVL), 303–323 (AWAG…SPLI), 334–354 (LLVT…TDFY), 363–383 (IWPQ…LTTI), 399–419 (LSNF…STLW), and 478–498 (IFLA…LAKP).

The protein belongs to the major facilitator superfamily. EmrB family. As to quaternary structure, probably part of a tripartite efflux system FarAB-MtrE, which is composed of an inner membrane transporter, FarB, a periplasmic membrane fusion protein, FarA, and an outer membrane component, MtrE.

The protein resides in the cell inner membrane. Functionally, mediates resistance to long-chained antibacterial fatty acids (FAs). Function is dependent on the MtrE outer membrane protein. This is Fatty acid resistance protein FarB from Neisseria gonorrhoeae.